The chain runs to 648 residues: MREPLLQLSGIRRHFGDGERRVEVLKGIDLTIARGEMVAIVGASGSGKSTLLNILGCLDQPSEGSYRVAGRETSRLTADALATLRREHFGFIFQRYHLLGDLSARDNVALPALYAGLAGDARKARAERLLQRLGLGSRLDYKPSQLSGGQQQRVSIARALINGGQVILADEPTGALDSQSGAEVLGILGALHRQGHTLVLVTHDMAIAEQAERIIELKDGAVVADRRREPTPPSPAPTTSRADTGGRGGLAGRLGAAFKMALLAMRAQRMRTFLTMLGIIIGIAAVVSVVALGRGSQQQVLANINAMGTSTLEIFPGSGFGDRRAEAVQTLRVEDAEALAGLGYVHSVTPSLATSVTLRRGSQAVLGSVNGVGEQFFQVRGYRLLQGMLFDAASVTALAQEVVIDENSLARLFGAGESPLGQVILLGSLPCRVIGVVARNQSGFGSDENLNVWIPHTTAMTRMLGQSHLRSISVRVQDEVALAAAEDGISRLLRERHGAQDFFVLNTDSIRQAITSTNATLTLLIAMIALISLVVGGIGVMNIMLVSVSERTREIGVRMAVGARTGDILQQFLIEAVLVCLLGGAAGVLLSLLIGVLFEHFSSQFTLSYSLDAVLMAFFCSSLIGVLFGFFPARRAARMDPIHALERE.

Positions 6-244 (LQLSGIRRHF…PAPTTSRADT (239 aa)) constitute an ABC transporter domain. 42–49 (GASGSGKS) provides a ligand contact to ATP. The interval 222–248 (VVADRRREPTPPSPAPTTSRADTGGRG) is disordered. Transmembrane regions (helical) follow at residues 273–293 (FLTMLGIIIGIAAVVSVVALG), 521–541 (LTLLIAMIALISLVVGGIGVM), 578–598 (LVCLLGGAAGVLLSLLIGVLF), and 613–633 (AVLMAFFCSSLIGVLFGFFPA).

The protein belongs to the ABC transporter superfamily. Macrolide exporter (TC 3.A.1.122) family. Homodimer. Part of the tripartite efflux system MacAB-TolC, which is composed of an inner membrane transporter, MacB, a periplasmic membrane fusion protein, MacA, and an outer membrane component, TolC. The complex forms a large protein conduit and can translocate molecules across both the inner and outer membranes. Interacts with MacA.

The protein resides in the cell inner membrane. Its function is as follows. Part of the tripartite efflux system MacAB-TolC. MacB is a non-canonical ABC transporter that contains transmembrane domains (TMD), which form a pore in the inner membrane, and an ATP-binding domain (NBD), which is responsible for energy generation. Confers resistance against macrolides. This Aeromonas hydrophila subsp. hydrophila (strain ATCC 7966 / DSM 30187 / BCRC 13018 / CCUG 14551 / JCM 1027 / KCTC 2358 / NCIMB 9240 / NCTC 8049) protein is Macrolide export ATP-binding/permease protein MacB 1.